Here is a 775-residue protein sequence, read N- to C-terminus: Tumor necrosis factor alpha-induced protein 3 (775 aa).

An N-acetylalanine modification is found at Ala2. The tract at residues 58-300 (PQFREIIHKA…LTDPENEMKE (243 aa)) is TRAF-binding. The OTU domain occupies 92–263 (LVALKTNGDG…SQHFVPLVTL (172 aa)). Asp100 is a catalytic residue. The active-site Nucleophile is Cys103. 3 interaction with ubiquitin regions span residues 157 to 159 (LCY), 190 to 192 (SLE), and 224 to 227 (FAPL). His256 acts as the Proton acceptor in catalysis. Residues 369 to 775 (AQNPLEPSTP…ECYQFKQMYG (407 aa)) form an interaction with TNIP1 region. The A20-type 1 zinc finger occupies 381 to 416 (SLMDIKCETPNCPFFMSVNTQPLCHECSERRQKNQS). The tract at residues 386-445 (KCETPNCPFFMSVNTQPLCHECSERRQKNQSKLPKLNSKLGPEGLPGVGLGSSNWSPEET) is interaction with RIPK1. Zn(2+) is bound by residues Cys387, Cys392, Cys404, and Cys407. Positions 415-455 (QSKLPKLNSKLGPEGLPGVGLGSSNWSPEETAGGPHSAPPT) are disordered. At Ser451 the chain carries Phosphoserine. A20-type zinc fingers lie at residues 464 to 499 (ETTA…NASH) and 500 to 533 (TADP…AEPS). Cys470, Cys475, Cys487, Cys490, Cys506, Cys509, Cys521, and Cys524 together coordinate Zn(2+). A compositionally biased stretch (polar residues) spans 567–580 (TGNVSPSGCLSQAA). A disordered region spans residues 567 to 590 (TGNVSPSGCLSQAARTPGDRAGTS). 4 A20-type zinc fingers span residues 586 to 621 (RAGT…ENKQ), 636 to 671 (FQNN…NQRF), 695 to 730 (VASR…RVGS), and 741 to 775 (EPPK…QMYG). Residues 590–640 (SKCRKAGCMYFGTPENKGFCTLCFIEYRENKQSVTASEKAGSPAPRFQNNV) are required for proteasomal degradation of UBE2N and UBE2D3, TRAF6 deubiquitination, and TAX1BP1 interaction with UBE2N. A sufficient for inhibitory activity of TNF-induced NF-kappa-B activity region spans residues 591 to 775 (KCRKAGCMYF…ECYQFKQMYG (185 aa)). 16 residues coordinate Zn(2+): Cys592, Cys597, Cys609, Cys612, Cys642, Cys647, Cys659, Cys662, Cys701, Cys706, Cys718, Cys721, Cys747, Cys752, Cys764, and Cys767. The interval 682–775 (RSSQHRDMPR…ECYQFKQMYG (94 aa)) is required for lysosomal localization and for TRAF2 lysosomal degradation.

The protein belongs to the peptidase C64 family. As to quaternary structure, homodimer. Interacts with TNIP1, TAX1BP1 and TRAF2. Interacts with RNF11, ITCH and TAX1BP1 only after TNF stimulation; these interaction are transient and they are lost after 1 hour of stimulation with TNF. Interacts with YWHAZ and YWHAH. Interacts with IKBKG; the interaction is induced by TNF stimulation and by polyubiquitin. Interacts with RIPK1. Interacts with UBE2N; the interaction requires TAX1BP1. Interacts with TRAF6. In terms of tissue distribution, found in most tissues during development. Strikingly high levels are found in lymphoid organs, including the thymus, spleen, and gut-associated lymphoid tissue. Constitutively expressed in immature and mature thymocyte subpopulations as well as in resting peripheral T-cells; activation of these leads to down-regulation.

Its subcellular location is the cytoplasm. The protein localises to the nucleus. The protein resides in the lysosome. The catalysed reaction is Thiol-dependent hydrolysis of ester, thioester, amide, peptide and isopeptide bonds formed by the C-terminal Gly of ubiquitin (a 76-residue protein attached to proteins as an intracellular targeting signal).. Ubiquitin-editing enzyme that contains both ubiquitin ligase and deubiquitinase activities. Involved in immune and inflammatory responses signaled by cytokines, such as TNF-alpha and IL-1 beta, or pathogens via Toll-like receptors (TLRs) through terminating NF-kappa-B activity. Essential component of a ubiquitin-editing protein complex, comprising also RNF11, ITCH and TAX1BP1, that ensures the transient nature of inflammatory signaling pathways. In cooperation with TAX1BP1 promotes disassembly of E2-E3 ubiquitin protein ligase complexes in IL-1R and TNFR-1 pathways; affected are at least E3 ligases TRAF6, TRAF2 and BIRC2, and E2 ubiquitin-conjugating enzymes UBE2N and UBE2D3. In cooperation with TAX1BP1 promotes ubiquitination of UBE2N and proteasomal degradation of UBE2N and UBE2D3. Upon TNF stimulation, deubiquitinates 'Lys-63'-polyubiquitin chains on RIPK1 and catalyzes the formation of 'Lys-48'-polyubiquitin chains. This leads to RIPK1 proteasomal degradation and consequently termination of the TNF- or LPS-mediated activation of NF-kappa-B. Deubiquitinates TRAF6 probably acting on 'Lys-63'-linked polyubiquitin. Upon T-cell receptor (TCR)-mediated T-cell activation, deubiquitinates 'Lys-63'-polyubiquitin chains on MALT1 thereby mediating disassociation of the CBM (CARD11:BCL10:MALT1) and IKK complexes and preventing sustained IKK activation. Deubiquitinates NEMO/IKBKG; the function is facilitated by TNIP1 and leads to inhibition of NF-kappa-B activation. Upon stimulation by bacterial peptidoglycans, probably deubiquitinates RIPK2. Can also inhibit I-kappa-B-kinase (IKK) through a non-catalytic mechanism which involves polyubiquitin; polyubiquitin promotes association with IKBKG and prevents IKK MAP3K7-mediated phosphorylation. Targets TRAF2 for lysosomal degradation. In vitro able to deubiquitinate 'Lys-11'-, 'Lys-48'- and 'Lys-63' polyubiquitin chains. Inhibitor of programmed cell death. Has a role in the function of the lymphoid system. Required for LPS-induced production of pro-inflammatory cytokines and IFN beta in LPS-tolerized macrophages. In Mus musculus (Mouse), this protein is Tumor necrosis factor alpha-induced protein 3 (Tnfaip3).